A 330-amino-acid polypeptide reads, in one-letter code: Probable NAD(P)H-dependent D-xylose reductase xyl1 (330 aa).

The active-site Proton donor is the tyrosine 50. Histidine 112 is a substrate binding site. Residues 166–167, 215–224, and 271–281 each bind NAD(+); these read SN, SSFGPLSFLE, and KSNNPTRLAQN.

It belongs to the aldo/keto reductase family.

The enzyme catalyses xylitol + NAD(+) = D-xylose + NADH + H(+). It catalyses the reaction xylitol + NADP(+) = D-xylose + NADPH + H(+). It participates in carbohydrate metabolism; D-xylose degradation. In terms of biological role, catalyzes the initial reaction in the xylose utilization pathway by reducing D-xylose into xylitol. Xylose is a major component of hemicelluloses such as xylan. Most fungi utilize D-xylose via three enzymatic reactions, xylose reductase (XR), xylitol dehydrogenase (XDH), and xylulokinase, to form xylulose 5-phosphate, which enters pentose phosphate pathway. This is Probable NAD(P)H-dependent D-xylose reductase xyl1 (xyl1) from Aspergillus clavatus (strain ATCC 1007 / CBS 513.65 / DSM 816 / NCTC 3887 / NRRL 1 / QM 1276 / 107).